The sequence spans 547 residues: Chaperonin GroEL 1 (547 aa).

ATP is bound by residues 30 to 33 (TLGP), Lys51, 87 to 91 (DGTTT), Gly415, and Asp494. A disordered region spans residues 524–547 (PKGKAKGGGAGAGMPDYGGDDMDY).

The protein belongs to the chaperonin (HSP60) family. In terms of assembly, forms a cylinder of 14 subunits composed of two heptameric rings stacked back-to-back. Interacts with the co-chaperonin GroES.

The protein resides in the cytoplasm. It carries out the reaction ATP + H2O + a folded polypeptide = ADP + phosphate + an unfolded polypeptide.. Together with its co-chaperonin GroES, plays an essential role in assisting protein folding. The GroEL-GroES system forms a nano-cage that allows encapsulation of the non-native substrate proteins and provides a physical environment optimized to promote and accelerate protein folding. The polypeptide is Chaperonin GroEL 1 (Myxococcus xanthus (strain DK1622)).